Reading from the N-terminus, the 655-residue chain is Protein nipi-3 (655 aa).

Residues 1–35 (MARTKCKTKTVANPRTGVRKTAKDLSEPVRQDAVS) form a disordered region. Basic and acidic residues predominate over residues 21–35 (TAKDLSEPVRQDAVS). The Protein kinase domain occupies 200–470 (IGIFVIYGTG…NQVNGDFPEI (271 aa)). ATP-binding positions include 206 to 214 (YGTGLVTRA) and K235.

It belongs to the protein kinase superfamily. CAMK Ser/Thr protein kinase family. As to quaternary structure, may interact with transcription factor cebp-1 (via N-terminus). In terms of tissue distribution, expressed in epidermis, pharynx, intestine, a subset of head neurons and motoneurons.

It localises to the nucleus. Its function is as follows. Adapter protein that regulates different signaling pathways. Required for larval development and viability. Involved in negatively modulating pmk-1 p38/MAPK signaling. Involved in innate immunity, acting either in a manner dependent upon, or independent of, the pmk-1 or pmk-3 p38/MAPK pathways. Has a protective role in response to infection by the Gram-negative bacterium P.aeruginosa, acting by negatively modulating expression of cebp-1, and regulating the pmk-1 p38/MAPK pathway, leading to activation of transcription factor skn-1. Required to prevent P.aeruginosa toxin ToxA-mediated lethality, probably acting via modulating the effects of translational inhibition caused by the toxin. By regulating the up-regulation in the epidermis of antimicrobial peptides nlp-29 and nlp-31, plays a role in resistance to fungal infection. In Caenorhabditis elegans, this protein is Protein nipi-3.